A 311-amino-acid chain; its full sequence is p-hydroxybenzoic acid efflux pump subunit AaeA (311 aa).

The chain crosses the membrane as a helical span at residues 11–31; it reads VGITVLVVVLAVIAIFNVWAF.

This sequence belongs to the membrane fusion protein (MFP) (TC 8.A.1) family.

Its subcellular location is the cell inner membrane. Forms an efflux pump with AaeB. This chain is p-hydroxybenzoic acid efflux pump subunit AaeA, found in Yersinia pseudotuberculosis serotype O:3 (strain YPIII).